Here is a 151-residue protein sequence, read N- to C-terminus: Putative membrane protein ORF10 (151 aa).

The next 2 helical transmembrane spans lie at 7-23 (LCLAFGVTLIVIVGVVV) and 107-123 (GLVAAFNGFWLSFIIMY).

It is found in the membrane. This is Putative membrane protein ORF10 (ORF10) from Ictalurid herpesvirus 1 (strain Auburn) (IcHV-1).